The following is a 436-amino-acid chain: MSSLPMFDSVSRFLPTANEDEQFWWKLTGRHMARMMHEAGYPEDRQVECLLFHRFKVVPCLGPRPHSDKPWYKSRVGGGAADGCPINYSWRFGTSDRKPHIRNFIEPLGALTNTPADPLNEVATKALLRDYSMTLPNVDLELFWTFAPHYRPRIIEKADMEKLAGASLLVGAEMSPDSRNIDIKAYMYPRVPSQTSQLLTTILPQAMRDAYGEDVCLDSLNLVRDFMTNDPEGSQLTLTGTTGIDCCKLQDTRVKIYVITRNTSFDHIAAIMTLGGRRPISEELLNQLRALWFELKGAPADFTSSEQLPAQTKPDGTKNPIVVPFYFDIQPRLALPDVKAYVDVSTSPVSDLAAAEAVVRHLERHGSGQNPKAYMNVLQDITPVEELETRKGALAFYSIAVKKNELDITSYFNPQVYKRYFAHEVQLNGQRRSAFE.

Belongs to the tryptophan dimethylallyltransferase family.

The protein operates within secondary metabolite biosynthesis. Its function is as follows. Prenyltransferase; part of the gene cluster that mediates the biosynthesis of neosartoricin B, a prenylated anthracenone that probably exhibits T-cell antiproliferative activity, suggestive of a physiological role as an immunosuppressive agent. The non-reducing polyketide synthase nscA probably synthesizes and cyclizes the decaketide backbone. The hydrolase nscB then mediates the product release through hydrolysis followed by spontaneous decarboxylation. The prenyltransferase nscD catalyzes the addition of the dimethylallyl group to the aromatic C5. The FAD-dependent monooxygenase nscC is then responsible for the stereospecific hydroxylation at C2. Neosartoricin B can be converted into two additional compounds neosartoricins C and D. Neosartoricin C is a spirocyclic compound that is cyclized through the attack of C3 hydroxyl on C14, followed by dehydration. On the other hand, neosartoricin D is a further cyclized compound in which attack of C2 on C14 in neosartoricin C results in the formation of the acetal-containing dioxabicyclo-octanone ring. Both of these compounds are novel and possibly represent related metabolites of the gene cluster. This Arthroderma otae (strain ATCC MYA-4605 / CBS 113480) (Microsporum canis) protein is Prenyltransferase nscD.